We begin with the raw amino-acid sequence, 111 residues long: Nucleoid-associated protein CT0805 (111 aa).

The protein belongs to the YbaB/EbfC family. Homodimer.

It is found in the cytoplasm. Its subcellular location is the nucleoid. Its function is as follows. Binds to DNA and alters its conformation. May be involved in regulation of gene expression, nucleoid organization and DNA protection. The polypeptide is Nucleoid-associated protein CT0805 (Chlorobaculum tepidum (strain ATCC 49652 / DSM 12025 / NBRC 103806 / TLS) (Chlorobium tepidum)).